Here is a 496-residue protein sequence, read N- to C-terminus: Apulose kinase (496 aa).

ATP-binding positions include Thr-13–Asn-15, Thr-267, Gly-308, and Gly-408–Asn-412.

Belongs to the FGGY kinase family.

It catalyses the reaction apulose + ATP = apulose 4-phosphate + ADP + H(+). It functions in the pathway carbohydrate metabolism. In terms of biological role, involved in catabolism of D-apiose. Catalyzes phosphorylation of apulose to form apulose 4-phosphate. In Pectobacterium atrosepticum (strain SCRI 1043 / ATCC BAA-672) (Erwinia carotovora subsp. atroseptica), this protein is Apulose kinase.